A 463-amino-acid chain; its full sequence is Glutamate--tRNA ligase 2 (463 aa).

The short motif at 10-20 (PSPTGFLHIGS) is the 'HIGH' region element. The 'KMSKS' region signature appears at 239 to 243 (KLSKR). Lysine 242 lines the ATP pocket.

This sequence belongs to the class-I aminoacyl-tRNA synthetase family. Glutamate--tRNA ligase type 1 subfamily. In terms of assembly, monomer.

It localises to the cytoplasm. The catalysed reaction is tRNA(Glu) + L-glutamate + ATP = L-glutamyl-tRNA(Glu) + AMP + diphosphate. Catalyzes the attachment of glutamate to tRNA(Glu) in a two-step reaction: glutamate is first activated by ATP to form Glu-AMP and then transferred to the acceptor end of tRNA(Glu). The protein is Glutamate--tRNA ligase 2 of Rickettsia akari (strain Hartford).